A 206-amino-acid chain; its full sequence is Dephospho-CoA kinase (206 aa).

Residues 4–200 enclose the DPCK domain; sequence TVALTGGIGS…ASYLKLASQF (197 aa). 12 to 17 is an ATP binding site; it reads GSGKST.

It belongs to the CoaE family.

The protein resides in the cytoplasm. The enzyme catalyses 3'-dephospho-CoA + ATP = ADP + CoA + H(+). Its pathway is cofactor biosynthesis; coenzyme A biosynthesis; CoA from (R)-pantothenate: step 5/5. Catalyzes the phosphorylation of the 3'-hydroxyl group of dephosphocoenzyme A to form coenzyme A. This chain is Dephospho-CoA kinase, found in Salmonella choleraesuis (strain SC-B67).